Here is a 92-residue protein sequence, read N- to C-terminus: MSKKKGVGSSRNGRDSESKRLGVKRFDGQFVKAGSILVRQRGTKFMPGLNVGRGGDDTLFSKIDGYVKFERKGKNKKAVSVYTEEQFESVAN.

A disordered region spans residues 1–21 (MSKKKGVGSSRNGRDSESKRL). A compositionally biased stretch (basic and acidic residues) spans 12-21 (NGRDSESKRL).

The protein belongs to the bacterial ribosomal protein bL27 family.

In Halothermothrix orenii (strain H 168 / OCM 544 / DSM 9562), this protein is Large ribosomal subunit protein bL27.